The sequence spans 808 residues: Dynamin-like protein B (808 aa).

The Dynamin-type G domain occupies 43–340 (FIETPEFVFI…TWRKYLDSVP (298 aa)). The interval 53–60 (GKDGNGKS) is G1 motif. 53 to 60 (GKDGNGKS) is a binding site for GTP. The tract at residues 79 to 80 (LR) is G2 motif. The G3 motif stretch occupies residues 150 to 153 (EPPS). GTP is bound by residues 150–154 (EPPSV) and 239–242 (NKFH). Positions 239–242 (NKFH) are G4 motif. The G5 motif stretch occupies residues 276–279 (PSTA). Disordered stretches follow at residues 536-565 (SSFR…SSSI) and 665-695 (SLNN…NSNH). Composition is skewed to low complexity over residues 552-565 (SSPS…SSSI) and 665-694 (SLNN…NNSN).

This sequence belongs to the TRAFAC class dynamin-like GTPase superfamily. Dynamin/Fzo/YdjA family.

The protein localises to the cytoplasm. The enzyme catalyses GTP + H2O = GDP + phosphate + H(+). In terms of biological role, involved in cytokinesis. May hydrolyze GTP. This Dictyostelium discoideum (Social amoeba) protein is Dynamin-like protein B (dlpB).